A 214-amino-acid chain; its full sequence is 3-demethoxyubiquinol 3-hydroxylase (214 aa).

Residues Glu-63, Glu-93, His-96, Glu-145, Glu-177, and His-180 each contribute to the Fe cation site.

It belongs to the COQ7 family. Fe cation serves as cofactor.

The protein localises to the cell membrane. The catalysed reaction is a 5-methoxy-2-methyl-3-(all-trans-polyprenyl)benzene-1,4-diol + AH2 + O2 = a 3-demethylubiquinol + A + H2O. The protein operates within cofactor biosynthesis; ubiquinone biosynthesis. Its function is as follows. Catalyzes the hydroxylation of 2-nonaprenyl-3-methyl-6-methoxy-1,4-benzoquinol during ubiquinone biosynthesis. The sequence is that of 3-demethoxyubiquinol 3-hydroxylase from Nitrosococcus oceani (strain ATCC 19707 / BCRC 17464 / JCM 30415 / NCIMB 11848 / C-107).